A 152-amino-acid chain; its full sequence is Small ribosomal subunit protein uS15 (152 aa).

Residues 1 to 11 (MAKMHTKRKGK) are compositionally biased toward basic residues. Residues 1-24 (MAKMHTKRKGKSSSTRPNRTEPPE) are disordered.

This sequence belongs to the universal ribosomal protein uS15 family. In terms of assembly, part of the 30S ribosomal subunit.

This chain is Small ribosomal subunit protein uS15, found in Methanosarcina mazei (strain ATCC BAA-159 / DSM 3647 / Goe1 / Go1 / JCM 11833 / OCM 88) (Methanosarcina frisia).